The sequence spans 201 residues: Outer-membrane lipoprotein LolB (201 aa).

The first 18 residues, 1 to 18 (MKWCRLSIILMSLILLAG), serve as a signal peptide directing secretion. Cys19 carries the N-palmitoyl cysteine lipid modification. A lipid anchor (S-diacylglycerol cysteine) is attached at Cys19.

The protein belongs to the LolB family. As to quaternary structure, monomer.

It localises to the cell outer membrane. Its function is as follows. Plays a critical role in the incorporation of lipoproteins in the outer membrane after they are released by the LolA protein. This Nitrosococcus oceani (strain ATCC 19707 / BCRC 17464 / JCM 30415 / NCIMB 11848 / C-107) protein is Outer-membrane lipoprotein LolB.